The following is a 326-amino-acid chain: tRNA-modifying protein YgfZ (326 aa).

Folate contacts are provided by W27 and W189.

Belongs to the tRNA-modifying YgfZ family.

The protein resides in the cytoplasm. Folate-binding protein involved in regulating the level of ATP-DnaA and in the modification of some tRNAs. It is probably a key factor in regulatory networks that act via tRNA modification, such as initiation of chromosomal replication. The chain is tRNA-modifying protein YgfZ from Shigella dysenteriae serotype 1 (strain Sd197).